Reading from the N-terminus, the 1129-residue chain is Kinesin-like protein KIP1 (1129 aa).

A disordered region spans residues 1 to 49 (MLEQAEKLMKRNSSGAMSAPQSKPLARSRSSTMPTTTQKRVRSSQQSEG). Composition is skewed to polar residues over residues 11 to 21 (RNSSGAMSAPQ) and 28 to 48 (SRSS…QQSE). The 364-residue stretch at 54–417 (NIKVYVRCRS…LEYATRAKSI (364 aa)) folds into the Kinesin motor domain. 139–146 (GQTGTGKT) provides a ligand contact to ATP. 3 coiled-coil regions span residues 422-513 (QVNQ…ELDV), 681-765 (LEKE…QKIV), and 919-948 (DDQR…TLVN).

It belongs to the TRAFAC class myosin-kinesin ATPase superfamily. Kinesin family. BimC subfamily.

It is found in the cytoplasm. Its subcellular location is the cytoskeleton. It localises to the spindle. Functionally, required for assembly of the mitotic spindle. Interacts with spindle microtubules to produce an outwardly directed force acting upon the poles. Following spindle assembly, CIN8 and KIP1 apparently act to oppose a force that draws separated poles back together. This force seems to be mediate by KAR3. The sequence is that of Kinesin-like protein KIP1 (KIP1) from Eremothecium gossypii (strain ATCC 10895 / CBS 109.51 / FGSC 9923 / NRRL Y-1056) (Yeast).